Consider the following 698-residue polypeptide: Elongation factor G 1 (698 aa).

The tr-type G domain maps to 8-290 (ERYRNIGICA…AVIEFLPSPT (283 aa)). GTP-binding positions include 17–24 (AHVDAGKT), 88–92 (DTPGH), and 142–145 (NKMD).

The protein belongs to the TRAFAC class translation factor GTPase superfamily. Classic translation factor GTPase family. EF-G/EF-2 subfamily.

The protein localises to the cytoplasm. In terms of biological role, catalyzes the GTP-dependent ribosomal translocation step during translation elongation. During this step, the ribosome changes from the pre-translocational (PRE) to the post-translocational (POST) state as the newly formed A-site-bound peptidyl-tRNA and P-site-bound deacylated tRNA move to the P and E sites, respectively. Catalyzes the coordinated movement of the two tRNA molecules, the mRNA and conformational changes in the ribosome. The polypeptide is Elongation factor G 1 (Vibrio cholerae serotype O1 (strain ATCC 39315 / El Tor Inaba N16961)).